A 653-amino-acid polypeptide reads, in one-letter code: Large subunit GTPase 1 homolog (653 aa).

Positions 1 to 31 are disordered; it reads MGRRRAPAGGSLGRALMRHQTQRSRSHRHTD. A compositionally biased stretch (basic residues) spans 16-28; it reads LMRHQTQRSRSHR. Phosphoserine occurs at positions 93 and 97. Residues 164 to 445 form the CP-type G domain; the sequence is WRQLWRVIER…LCDCPGLVMP (282 aa). Residue 212 to 215 participates in GTP binding; that stretch reads NKAD. The disordered stretch occupies residues 251 to 358; it reads DSEEEANKDD…RKTPQKRQLH (108 aa). Position 252 is a phosphoserine (S252). The span at 258-288 shows a compositional bias: basic and acidic residues; it reads KDDRQSNTAEFEHSSFDEAEISHSETEHLPA. Residues 299-333 are compositionally biased toward acidic residues; sequence TTDEDDSEYEDCPEEEEDDWQTCSEEDGPEEEDCG. GTP-binding positions include 394 to 401 and 438 to 441; these read GYPNVGKS and DCPG. A disordered region spans residues 630 to 653; that stretch reads SENGAGKPWKKHGNRNKKEKSCRL. Residues 637–647 are compositionally biased toward basic residues; that stretch reads PWKKHGNRNKK.

The protein belongs to the TRAFAC class YlqF/YawG GTPase family. LSG1 subfamily.

The protein resides in the cytoplasm. Its subcellular location is the endoplasmic reticulum. It localises to the nucleus. The protein localises to the cajal body. It carries out the reaction GTP + H2O = GDP + phosphate + H(+). Functions as a GTPase. May act by mediating the release of NMD3 from the 60S ribosomal subunit after export into the cytoplasm during the 60S ribosomal subunit maturation. The polypeptide is Large subunit GTPase 1 homolog (Macaca fascicularis (Crab-eating macaque)).